The chain runs to 616 residues: Proline--tRNA ligase (616 aa).

The protein belongs to the class-II aminoacyl-tRNA synthetase family. ProS type 1 subfamily. In terms of assembly, homodimer.

The protein resides in the cytoplasm. The catalysed reaction is tRNA(Pro) + L-proline + ATP = L-prolyl-tRNA(Pro) + AMP + diphosphate. Functionally, catalyzes the attachment of proline to tRNA(Pro) in a two-step reaction: proline is first activated by ATP to form Pro-AMP and then transferred to the acceptor end of tRNA(Pro). As ProRS can inadvertently accommodate and process non-cognate amino acids such as alanine and cysteine, to avoid such errors it has two additional distinct editing activities against alanine. One activity is designated as 'pretransfer' editing and involves the tRNA(Pro)-independent hydrolysis of activated Ala-AMP. The other activity is designated 'posttransfer' editing and involves deacylation of mischarged Ala-tRNA(Pro). The misacylated Cys-tRNA(Pro) is not edited by ProRS. The protein is Proline--tRNA ligase of Streptococcus gordonii (strain Challis / ATCC 35105 / BCRC 15272 / CH1 / DL1 / V288).